Here is a 469-residue protein sequence, read N- to C-terminus: Glutamate--tRNA ligase (469 aa).

A 'HIGH' region motif is present at residues 9–19 (PSPTGYLHVGG). Zn(2+) contacts are provided by Cys98, Cys100, Cys125, and Asp127. Positions 237 to 241 (KLSKR) match the 'KMSKS' region motif. Lys240 is an ATP binding site.

Belongs to the class-I aminoacyl-tRNA synthetase family. Glutamate--tRNA ligase type 1 subfamily. As to quaternary structure, monomer. It depends on Zn(2+) as a cofactor.

It is found in the cytoplasm. The catalysed reaction is tRNA(Glu) + L-glutamate + ATP = L-glutamyl-tRNA(Glu) + AMP + diphosphate. In terms of biological role, catalyzes the attachment of glutamate to tRNA(Glu) in a two-step reaction: glutamate is first activated by ATP to form Glu-AMP and then transferred to the acceptor end of tRNA(Glu). The chain is Glutamate--tRNA ligase from Erwinia tasmaniensis (strain DSM 17950 / CFBP 7177 / CIP 109463 / NCPPB 4357 / Et1/99).